The sequence spans 278 residues: HTH-type transcriptional regulator HdfR (278 aa).

The HTH lysR-type domain maps to 1 to 58 (MDTELLKTFLEVSRTRHFGRAAEALYLTQSAVSFRIRQLENQLGVNLFTRHRNNIRLT). The segment at residues 18 to 37 (FGRAAEALYLTQSAVSFRIR) is a DNA-binding region (H-T-H motif).

It belongs to the LysR transcriptional regulatory family.

In terms of biological role, negatively regulates the transcription of the flagellar master operon flhDC by binding to the upstream region of the operon. This is HTH-type transcriptional regulator HdfR from Salmonella newport (strain SL254).